Reading from the N-terminus, the 331-residue chain is MQNSTLIDSFGRQVTYVRLSVTDRCDFRCIYCMAEDMTFLPRKDVLSLEEFALLGRAFAELGVTKIRVSGGEPLIRKDVIQLFESLGAINSINDLCLTSNGSKLTELAKPLVDAGVHRINVSLDTLNEQRFKELTRFGDLNTVLKGIDAALNAGFKKIKLNSVVMKNYNLQEAADLATYALERGMDISFIEEMPLGEIHSHSRDVEFISSDELRNQLSNSFELTATNEHTGGPSRYWKARDYNAKIGFISPHSHNFCDTCNRVRVTASGRLLLCLGNEHSVDLRAILRAHPGEIEPIKEALINAMAIKPEKHEFNLEEEPQILRFMNMTGG.

The region spanning 9 to 233 is the Radical SAM core domain; the sequence is SFGRQVTYVR…TATNEHTGGP (225 aa). GTP is bound at residue Arg18. 2 residues coordinate [4Fe-4S] cluster: Cys25 and Cys29. Tyr31 serves as a coordination point for S-adenosyl-L-methionine. Cys32 is a [4Fe-4S] cluster binding site. Arg67 contacts GTP. Gly71 provides a ligand contact to S-adenosyl-L-methionine. Thr98 is a GTP binding site. Ser122 is an S-adenosyl-L-methionine binding site. Residue Lys159 participates in GTP binding. Met193 lines the S-adenosyl-L-methionine pocket. [4Fe-4S] cluster is bound by residues Cys257 and Cys260. 262 to 264 is a GTP binding site; that stretch reads RVR. Residue Cys274 coordinates [4Fe-4S] cluster.

The protein belongs to the radical SAM superfamily. MoaA family. As to quaternary structure, monomer and homodimer. Requires [4Fe-4S] cluster as cofactor.

The enzyme catalyses GTP + AH2 + S-adenosyl-L-methionine = (8S)-3',8-cyclo-7,8-dihydroguanosine 5'-triphosphate + 5'-deoxyadenosine + L-methionine + A + H(+). Its pathway is cofactor biosynthesis; molybdopterin biosynthesis. Its function is as follows. Catalyzes the cyclization of GTP to (8S)-3',8-cyclo-7,8-dihydroguanosine 5'-triphosphate. The sequence is that of GTP 3',8-cyclase from Saccharophagus degradans (strain 2-40 / ATCC 43961 / DSM 17024).